We begin with the raw amino-acid sequence, 196 residues long: O-methyltransferase dpmpI (196 aa).

Residues 127-128 (GG), D152, and 174-175 (SF) contribute to the S-adenosyl-L-methionine site. A disordered region spans residues 166 to 196 (NGIEAVPHSFEDPQPIKSKSPRLDNLARERL). The span at 186 to 196 (PRLDNLARERL) shows a compositional bias: basic and acidic residues.

This sequence belongs to the class I-like SAM-binding methyltransferase superfamily. Cation-independent O-methyltransferase family.

It participates in secondary metabolite biosynthesis; terpenoid biosynthesis. O-methyltransferase; part of the gene cluster that mediates the biosynthesis of diterpenoid pyrones. The first step of the pathway is the synthesis of the alpha-pyrone moiety by the polyketide synthase dpmpA via condensation of one acetyl-CoA starter unit with 3 malonyl-CoA units and 2 methylations. The alpha-pyrone is then combined with geranylgeranyl pyrophosphate (GGPP) formed by the GGPP synthase dpmpD through the action of the prenyltransferase dpmpC to yield a linear alpha-pyrone diterpenoid. Subsequent steps in the diterpenoid pyrone biosynthetic pathway involve the decalin core formation, which is initiated by the epoxidation of the C10-C11 olefin by the FAD-dependent oxidoreductase dpmpE, and is followed by a cyclization cascade catalyzed by the terpene cyclase dpmpB. The short chain dehydrogenase/reductase dpmpG then oxidizes the 8S hydroxy group to a ketone and the short chain dehydrogenase/reductase dpmpH reduces the ketone to the 8R hydroxy group to yield higginsianin B. Higginsianin B is further methylated by the methyltransferase dpmpI to produce the intermediate named FDDP B. The cytochrome P450 monooxygenase dpmpJ then oxidizes the C-26 methyl to primary alcohol, producing the final diterpenoid pyrone with a C-26 primary alcohol on the gamma-pyrone moiety named FDDP C. This is O-methyltransferase dpmpI from Macrophomina phaseolina (strain MS6) (Charcoal rot fungus).